The chain runs to 350 residues: Erythronate-4-phosphate dehydrogenase (350 aa).

Residues serine 45 and threonine 66 each contribute to the substrate site. NAD(+) is bound by residues 124–125, aspartate 144, 203–205, and aspartate 226; these read QV and ASR. Residue arginine 205 is part of the active site. The active site involves glutamate 231. The active-site Proton donor is the histidine 248. NAD(+) is bound at residue glycine 251.

It belongs to the D-isomer specific 2-hydroxyacid dehydrogenase family. PdxB subfamily. Homodimer.

It localises to the cytoplasm. It carries out the reaction 4-phospho-D-erythronate + NAD(+) = (R)-3-hydroxy-2-oxo-4-phosphooxybutanoate + NADH + H(+). Its pathway is cofactor biosynthesis; pyridoxine 5'-phosphate biosynthesis; pyridoxine 5'-phosphate from D-erythrose 4-phosphate: step 2/5. Its function is as follows. Catalyzes the oxidation of erythronate-4-phosphate to 3-hydroxy-2-oxo-4-phosphonooxybutanoate. The chain is Erythronate-4-phosphate dehydrogenase from Legionella pneumophila (strain Lens).